A 146-amino-acid chain; its full sequence is Anti-sigma F factor (146 aa).

Belongs to the anti-sigma-factor family.

It carries out the reaction L-seryl-[protein] + ATP = O-phospho-L-seryl-[protein] + ADP + H(+). The enzyme catalyses L-threonyl-[protein] + ATP = O-phospho-L-threonyl-[protein] + ADP + H(+). Binds to sigma F and blocks its ability to form an RNA polymerase holoenzyme (E-sigma F). Phosphorylates SpoIIAA on a serine residue. This phosphorylation may enable SpoIIAA to act as an anti-anti-sigma factor that counteracts SpoIIAB and thus releases sigma F from inhibition. This Bacillus licheniformis protein is Anti-sigma F factor.